Reading from the N-terminus, the 89-residue chain is Small ribosomal subunit protein uS15 (89 aa).

This sequence belongs to the universal ribosomal protein uS15 family. Part of the 30S ribosomal subunit. Forms a bridge to the 50S subunit in the 70S ribosome, contacting the 23S rRNA.

Its function is as follows. One of the primary rRNA binding proteins, it binds directly to 16S rRNA where it helps nucleate assembly of the platform of the 30S subunit by binding and bridging several RNA helices of the 16S rRNA. Forms an intersubunit bridge (bridge B4) with the 23S rRNA of the 50S subunit in the ribosome. The chain is Small ribosomal subunit protein uS15 from Lactiplantibacillus plantarum (strain ATCC BAA-793 / NCIMB 8826 / WCFS1) (Lactobacillus plantarum).